Here is a 260-residue protein sequence, read N- to C-terminus: Ribosomal RNA small subunit methyltransferase G (260 aa).

S-adenosyl-L-methionine contacts are provided by residues Gly94, Phe99, 117–119 (DSS), 145–146 (AE), and Arg164.

It belongs to the methyltransferase superfamily. RNA methyltransferase RsmG family.

The protein resides in the cytoplasm. In terms of biological role, specifically methylates the N7 position of a guanine in 16S rRNA. This Synechococcus sp. (strain JA-3-3Ab) (Cyanobacteria bacterium Yellowstone A-Prime) protein is Ribosomal RNA small subunit methyltransferase G.